The following is a 99-amino-acid chain: NADH dehydrogenase [ubiquinone] 1 alpha subcomplex subunit 2 (99 aa).

An N-acetylalanine modification is found at A2. C24 and C58 are oxidised to a cystine. K64 carries the post-translational modification N6-acetyllysine; alternate. K64 bears the N6-succinyllysine; alternate mark. Residue K75 is modified to N6-acetyllysine.

The protein belongs to the complex I NDUFA2 subunit family. As to quaternary structure, complex I is composed of 45 different subunits.

Its subcellular location is the mitochondrion inner membrane. Accessory subunit of the mitochondrial membrane respiratory chain NADH dehydrogenase (Complex I), that is believed not to be involved in catalysis. Complex I functions in the transfer of electrons from NADH to the respiratory chain. The immediate electron acceptor for the enzyme is believed to be ubiquinone. The chain is NADH dehydrogenase [ubiquinone] 1 alpha subcomplex subunit 2 (NDUFA2) from Bos taurus (Bovine).